Consider the following 280-residue polypeptide: Feruloyl esterase 1 (280 aa).

A signal peptide spans 1 to 20 (MKAFATRALAFSVAAGQALA). Disulfide bonds link cysteine 49–cysteine 278, cysteine 111–cysteine 114, and cysteine 247–cysteine 254. Asparagine 99 is a glycosylation site (N-linked (GlcNAc...) asparagine). Serine 153 serves as the catalytic Nucleophile. Aspartate 214 (charge relay system) is an active-site residue. Histidine 267 acts as the Charge relay system in catalysis.

The protein belongs to the AB hydrolase superfamily. FaeA family. Glycosylated.

It localises to the secreted. It catalyses the reaction feruloyl-polysaccharide + H2O = ferulate + polysaccharide.. Metal or basic ions Mn(2+), Ni(+), Mg(2+), and NH(4)(+) decrease the activity by 4.4% to 14.1%. The enzymatic activity is inhibited by Zn(2+) at a low concentration (1 mM) but not a high concentration (5 mM). Loses about a quarter of activity by the addition of 1 mM of Cu(2+) or Fe(3+) and activity is completely suppressed when the concentration was up to 5 mM. Low concentrations (0.25 and 0.5 M) of NaCl improve the activity by 5.6 % or 8.3%, respectively. In terms of biological role, involved in degradation of plant cell walls. Hydrolyzes the feruloyl-arabinose ester bond in arabinoxylans, and the feruloyl-galactose ester bond in pectin. This chain is Feruloyl esterase 1, found in Penicillium parvum (Eupenicillium parvum).